The sequence spans 284 residues: RAD52 motif-containing protein 1 (284 aa).

The necessary for nuclear localization and for nucleolar accumulation in response to heat shock stretch occupies residues M1–K92. Positions K15–R98 constitute an RRM domain. The segment at P90 to K133 is necessary for nuclear and nucleolar localization.

In terms of assembly, homodimer. As to expression, expressed in testis.

The protein localises to the nucleus. Its subcellular location is the cytoplasm. It localises to the nucleolus. It is found in the PML body. The protein resides in the cajal body. Functionally, may confer resistance to the antitumor agent cisplatin. Binds to DNA and RNA. The polypeptide is RAD52 motif-containing protein 1 (RDM1) (Homo sapiens (Human)).